The chain runs to 118 residues: Ribulose bisphosphate carboxylase small subunit (118 aa).

The protein belongs to the RuBisCO small chain family. As to quaternary structure, heterohexadecamer of 8 large and 8 small subunits.

In terms of biological role, ruBisCO catalyzes two reactions: the carboxylation of D-ribulose 1,5-bisphosphate, the primary event in carbon dioxide fixation, as well as the oxidative fragmentation of the pentose substrate. Both reactions occur simultaneously and in competition at the same active site. Although the small subunit is not catalytic it is essential for maximal activity. This Thiobacillus denitrificans (strain ATCC 25259 / T1) protein is Ribulose bisphosphate carboxylase small subunit.